Reading from the N-terminus, the 318-residue chain is NADH-ubiquinone oxidoreductase chain 1 (318 aa).

Transmembrane regions (helical) follow at residues 2-22 (FTIN…FLTL), 70-90 (MFII…VPLP), 100-120 (LGVL…LWSG), 146-166 (LAII…STLI), 171-191 (HLWL…STLA), 222-242 (LFFM…TILF), 253-273 (ELYT…FLWI), and 294-314 (LPLT…MSSI).

It belongs to the complex I subunit 1 family.

The protein resides in the mitochondrion inner membrane. It catalyses the reaction a ubiquinone + NADH + 5 H(+)(in) = a ubiquinol + NAD(+) + 4 H(+)(out). Functionally, core subunit of the mitochondrial membrane respiratory chain NADH dehydrogenase (Complex I) that is believed to belong to the minimal assembly required for catalysis. Complex I functions in the transfer of electrons from NADH to the respiratory chain. The immediate electron acceptor for the enzyme is believed to be ubiquinone. The polypeptide is NADH-ubiquinone oxidoreductase chain 1 (MT-ND1) (Rhinoceros unicornis (Greater Indian rhinoceros)).